The chain runs to 278 residues: MDVRQSIHSEHAKTLDTQTLRREFLIENIFVADEYTMVYSHIDRIIVGGIMPVSHSVEIGGEVGKQLGVSRLLDRRELGVINIGGAGAIIVDGQRHDIGHRDALYIGKGAKELVFVSNEASRPAKFYYNCAPAHTAYPTKKVSPADVAPVTLGDNLTSNRRTINKYFVPDVLETCQLSMGLTELAPGNLWNTMPCHTHERRMEVYLYFNMEEDSCVFHMMGQPQETRHIVMRNEQAVISPSWSIHSGVGTKAYTFIWGMVGENQVFDDMDHVAVQDLR.

Residues histidine 196, histidine 198, glutamate 203, and histidine 245 each contribute to the Zn(2+) site.

It belongs to the KduI family. It depends on Zn(2+) as a cofactor.

The catalysed reaction is 5-dehydro-4-deoxy-D-glucuronate = 3-deoxy-D-glycero-2,5-hexodiulosonate. The protein operates within glycan metabolism; pectin degradation; 2-dehydro-3-deoxy-D-gluconate from pectin: step 4/5. Functionally, catalyzes the isomerization of 5-dehydro-4-deoxy-D-glucuronate to 3-deoxy-D-glycero-2,5-hexodiulosonate. The protein is 4-deoxy-L-threo-5-hexosulose-uronate ketol-isomerase of Salmonella heidelberg (strain SL476).